A 337-amino-acid polypeptide reads, in one-letter code: Putative olfactory receptor 1F12P (337 aa).

Over 1-25 (MEGKNQTNISEFLLLGFSSWQQQQV) the chain is Extracellular. N-linked (GlcNAc...) asparagine glycans are attached at residues Asn-5 and Asn-8. A helical membrane pass occupies residues 26–49 (LLFALFLCLYLTGLFGNLLILLAI). Residues 50–57 (GSDHCLHT) lie on the Cytoplasmic side of the membrane. The helical transmembrane segment at 58-79 (PMYFFLANLSLVDLCLPSATVP) threads the bilayer. Over 80-100 (KMLLNIQTQTQTISYPGCLAQ) the chain is Extracellular. Cys-97 and Cys-189 are oxidised to a cystine. The helical transmembrane segment at 101–120 (MYFCMMFANMDNFLLTVMAY) threads the bilayer. At 121–139 (DRYVAICHPLHYSTIMALR) the chain is on the cytoplasmic side. A helical membrane pass occupies residues 140–158 (LCASLVAAPWVIAILNPLL). The Extracellular segment spans residues 159-196 (HTLMMAHLHFCSDNVIHHFFCDINSLLPLSCSDTSLNQ). The helical transmembrane segment at 197 to 219 (LSVLATVGLIFVVPSVCILVSYI) threads the bilayer. Residues 220–236 (LIVSAVMKVPSAQGKLK) are Cytoplasmic-facing. A helical transmembrane segment spans residues 237-259 (AFSTCGSHLALVILFYGAITGVY). Topologically, residues 260-272 (MSPLSNHSTEKDS) are extracellular. N-linked (GlcNAc...) asparagine glycosylation is present at Asn-265. Residues 273–292 (AASVIFMVVAPVLNPFIYSL) form a helical membrane-spanning segment. Residues 293–337 (RNNELKGTLKKTLSRPGAVAHACNPSTLGGRGGWIMRSGDRDHPG) are Cytoplasmic-facing.

The protein belongs to the G-protein coupled receptor 1 family.

It localises to the cell membrane. Its function is as follows. Odorant receptor. In Homo sapiens (Human), this protein is Putative olfactory receptor 1F12P.